The chain runs to 300 residues: Protease HtpX homolog (300 aa).

Helical transmembrane passes span 5-25 and 41-61; these read IFLLTLTNIAVIFLLTLFISL and TLFLFSMVVGFTGSFISLAIS. Histidine 146 contributes to the Zn(2+) binding site. The active site involves glutamate 147. Residue histidine 150 coordinates Zn(2+). 2 consecutive transmembrane segments (helical) span residues 161-181 and 196-216; these read LLQGVVNTFVVFLSRIIGFFV and IGFYLGMFISEIVLGLLASII. Position 225 (glutamate 225) interacts with Zn(2+).

This sequence belongs to the peptidase M48B family. It depends on Zn(2+) as a cofactor.

The protein localises to the cell inner membrane. The chain is Protease HtpX homolog from Methylacidiphilum infernorum (isolate V4) (Methylokorus infernorum (strain V4)).